Reading from the N-terminus, the 341-residue chain is DnaJ homolog subfamily C member 22 (341 aa).

The TM2 domain maps to 4–50 (GLLMTYALWAFGGPVGLHHLYLGRDSHALLWMLTLGGGGLGWLWEFW). 7 helical membrane passes run 5–25 (LLMTYALWAFGGPVGLHHLYL), 30–50 (HALLWMLTLGGGGLGWLWEFW), 81–101 (FASQMVVGVYFGLVALISLSS), 105–125 (FYIVGLPLAVGLGVLLVAAVG), 135–155 (LGAAFLTSPVFYGRPIAILPI), 185–205 (VGLAYLAFTGPLAYSTLYNTA), and 232–252 (VESVLLLPCRIWWLLVGAPGF). The region spanning 277-341 (LAHQVLGIPE…QPKKPRASWR (65 aa)) is the J domain.

It localises to the membrane. In terms of biological role, may function as a co-chaperone. In Rattus norvegicus (Rat), this protein is DnaJ homolog subfamily C member 22 (Dnajc22).